The chain runs to 493 residues: Gamma-aminobutyric acid receptor subunit alpha-3 (493 aa).

Residues 1–28 (MITTQMWHFYVTRVGLLLLISILPGTTG) form the signal peptide. The interval 27 to 54 (TGQGESRRQEPGDFVKQDIGGLSPKHAP) is disordered. Residues 29-276 (QGESRRQEPG…THFHLKRKIG (248 aa)) lie on the Extracellular side of the membrane. Basic and acidic residues predominate over residues 31 to 42 (ESRRQEPGDFVK). Asn-63 carries an N-linked (GlcNAc...) asparagine glycan. Arg-119 serves as a coordination point for 4-aminobutanoate. 2 N-linked (GlcNAc...) asparagine glycosylation sites follow: Asn-163 and Asn-176. Thr-182 contacts 4-aminobutanoate. An intrachain disulfide couples Cys-191 to Cys-205. Asn-228 carries N-linked (GlcNAc...) asparagine glycosylation. The next 3 membrane-spanning stretches (helical) occupy residues 277-298 (YFVIQTYLPCIMTVILSQVSFW), 304-325 (VPARTVFGVTTVLTMTTLSISA), and 338-359 (MDWFIAVCYAFVFSALIEFATV). At 360–458 (NYFTKRSWAW…TYNSVSKVDK (99 aa)) the chain is on the cytoplasmic side. Ser-427 carries the post-translational modification Phosphoserine. Thr-428 carries the phosphothreonine modification. 2 positions are modified to phosphoserine: Ser-434 and Ser-443. A helical membrane pass occupies residues 459-480 (ISRIIFPVLFAIFNLVYWATYV).

Belongs to the ligand-gated ion channel (TC 1.A.9) family. Gamma-aminobutyric acid receptor (TC 1.A.9.5) subfamily. GABRA3 sub-subfamily. As to quaternary structure, heteropentamer, formed by a combination of alpha (GABRA1-6), beta (GABRB1-3), gamma (GABRG1-3), delta (GABRD), epsilon (GABRE), rho (GABRR1-3), pi (GABRP) and theta (GABRQ) chains, each subunit exhibiting distinct physiological and pharmacological properties. Binds UBQLN1. Interacts with GPHN. In terms of tissue distribution, expressed in most brain regions. Expressed in lungs, in alveolar epithelium.

The protein localises to the postsynaptic cell membrane. It is found in the cell membrane. The catalysed reaction is chloride(in) = chloride(out). In terms of biological role, alpha subunit of the heteropentameric ligand-gated chloride channel gated by gamma-aminobutyric acid (GABA), a major inhibitory neurotransmitter in the brain. GABA-gated chloride channels, also named GABA(A) receptors (GABAAR), consist of five subunits arranged around a central pore and contain GABA active binding site(s) located at the alpha and beta subunit interface(s). When activated by GABA, GABAARs selectively allow the flow of chloride anions across the cell membrane down their electrochemical gradient. Chloride influx into the postsynaptic neuron following GABAAR opening decreases the neuron ability to generate a new action potential, thereby reducing nerve transmission. This Rattus norvegicus (Rat) protein is Gamma-aminobutyric acid receptor subunit alpha-3.